The chain runs to 280 residues: Protein IMPACT homolog (280 aa).

One can recognise an RWD domain in the interval 9 to 109; it reads DELLALESIY…QAAAERESKL (101 aa).

This sequence belongs to the IMPACT family. As to quaternary structure, interacts (via N-terminus) with gcn1 (via C-terminus); this interaction reduces the gcn1-gcn20 complex formation and prevents the interaction of gcn1 with gcn2 protein kinase and gcn2 activation in amino acid-starved cells. Interacts (via C-terminus) with act1; this interaction occurs in a gcn1-independent manner. Interacts with rpl39; this interaction occurs in a gcn1-independent manner. Associates (via middle region) with ribosomes; this association occurs in a gcn1-independent manner and persists under amino acid starvation conditions.

The protein resides in the cytoplasm. It localises to the nucleus. Its function is as follows. Translational regulator that ensures constant high levels of translation under amino acid starvation. Plays a role as a negative regulator of the gcn2 kinase activity; impairs gcn1-mediated gcn2 activation, and hence gcn2-mediated eIF-2-alpha phosphorylation in amino acid-starved cells and subsequent down-regulation of protein synthesis. In normal conditions, it resides in a actin complex and has no activity. The sequence is that of Protein IMPACT homolog (yih1) from Schizosaccharomyces pombe (strain 972 / ATCC 24843) (Fission yeast).